We begin with the raw amino-acid sequence, 63 residues long: MAQVCEICGKGPQFGNNISHAHNVTRRRWNVNLRPVKVKVGPTANKRVRVCTSCIKSGKITKA.

It belongs to the bacterial ribosomal protein bL28 family.

This is Large ribosomal subunit protein bL28 from Acidobacterium capsulatum (strain ATCC 51196 / DSM 11244 / BCRC 80197 / JCM 7670 / NBRC 15755 / NCIMB 13165 / 161).